The sequence spans 277 residues: Pristinamycin IIA synthase subunit B (277 aa).

As to quaternary structure, heterodimer of two subunits, SnaA and SnaB. FMN is required as a cofactor.

Functionally, catalyzes the oxidation of the proline residue of pristinamycin IIB (PIIB) to pristinamycin IIA (PIIA). In Streptomyces pristinaespiralis, this protein is Pristinamycin IIA synthase subunit B (snaB).